Consider the following 253-residue polypeptide: Ubiquinone/menaquinone biosynthesis C-methyltransferase UbiE (253 aa).

Residues Thr-76, Asp-97, 125–126, and Ser-142 each bind S-adenosyl-L-methionine; that span reads NA.

The protein belongs to the class I-like SAM-binding methyltransferase superfamily. MenG/UbiE family.

The enzyme catalyses a 2-demethylmenaquinol + S-adenosyl-L-methionine = a menaquinol + S-adenosyl-L-homocysteine + H(+). The catalysed reaction is a 2-methoxy-6-(all-trans-polyprenyl)benzene-1,4-diol + S-adenosyl-L-methionine = a 5-methoxy-2-methyl-3-(all-trans-polyprenyl)benzene-1,4-diol + S-adenosyl-L-homocysteine + H(+). It participates in quinol/quinone metabolism; menaquinone biosynthesis; menaquinol from 1,4-dihydroxy-2-naphthoate: step 2/2. Its pathway is cofactor biosynthesis; ubiquinone biosynthesis. Functionally, methyltransferase required for the conversion of demethylmenaquinol (DMKH2) to menaquinol (MKH2) and the conversion of 2-polyprenyl-6-methoxy-1,4-benzoquinol (DDMQH2) to 2-polyprenyl-3-methyl-6-methoxy-1,4-benzoquinol (DMQH2). This Xanthomonas axonopodis pv. citri (strain 306) protein is Ubiquinone/menaquinone biosynthesis C-methyltransferase UbiE.